Consider the following 62-residue polypeptide: Cobrotoxin II (62 aa).

A compositionally biased stretch (polar residues) spans 1 to 16 (LECHNQQSSQTPTTTG). Residues 1–23 (LECHNQQSSQTPTTTGCSGGENN) are disordered. 4 disulfides stabilise this stretch: Cys-3–Cys-24, Cys-17–Cys-41, Cys-43–Cys-54, and Cys-55–Cys-60.

The protein belongs to the three-finger toxin family. Short-chain subfamily. Type I alpha-neurotoxin sub-subfamily. As to expression, expressed by the venom gland.

It is found in the secreted. Functionally, binds to muscle nicotinic acetylcholine receptor (nAChR) and inhibit acetylcholine from binding to the receptor, thereby impairing neuromuscular transmission. In Naja kaouthia (Monocled cobra), this protein is Cobrotoxin II.